Reading from the N-terminus, the 244-residue chain is Putative quercetin 2,3-dioxygenase Mb0187c (244 aa).

A divalent metal cation contacts are provided by His-60, His-62, His-104, and Glu-106.

The protein belongs to the pirin family. Requires a divalent metal cation as cofactor.

The enzyme catalyses quercetin + O2 = 2-(3,4-dihydroxybenzoyloxy)-4,6-dihydroxybenzoate + CO. It participates in flavonoid metabolism; quercetin degradation. Putative quercetin 2,3-dioxygenase. In Mycobacterium bovis (strain ATCC BAA-935 / AF2122/97), this protein is Putative quercetin 2,3-dioxygenase Mb0187c.